The following is a 320-amino-acid chain: Ferrochelatase (320 aa).

Fe cation is bound by residues H194 and E275.

The protein belongs to the ferrochelatase family. Monomer.

The protein resides in the cytoplasm. It catalyses the reaction heme b + 2 H(+) = protoporphyrin IX + Fe(2+). It participates in porphyrin-containing compound metabolism; protoheme biosynthesis; protoheme from protoporphyrin-IX: step 1/1. In terms of biological role, catalyzes the ferrous insertion into protoporphyrin IX. The sequence is that of Ferrochelatase from Shigella flexneri serotype 5b (strain 8401).